The chain runs to 515 residues: Aldehyde dehydrogenase (515 aa).

Positions 1-12 (MTVAEQQPQHQG) are enriched in polar residues. Positions 1 to 20 (MTVAEQQPQHQGYANPGTPG) are disordered. 228–234 (GFGLEAG) lines the NAD(+) pocket. Catalysis depends on residues Glu272 and Cys311.

This sequence belongs to the aldehyde dehydrogenase family.

The catalysed reaction is an aldehyde + NAD(+) + H2O = a carboxylate + NADH + 2 H(+). The protein is Aldehyde dehydrogenase (aldA) of Deinococcus radiodurans (strain ATCC 13939 / DSM 20539 / JCM 16871 / CCUG 27074 / LMG 4051 / NBRC 15346 / NCIMB 9279 / VKM B-1422 / R1).